Consider the following 604-residue polypeptide: MAELGAGSLLTGDPAFNYQEHELNERLKRLYPAVNEEETPLPRSWSPKDKYSYIGLSQNNLRVHYKGHGKNHKDAASVRATHPIPAACGIYYFEVKIVSKGRDGYMGIGLSAQGVNMNRLPGWDKHSYGYHGDDGHSFCSSGTGQPYGPTFTTGDVIGCCVNLINNTCFYTKNGHSLGVAFTDLPPNLYPTVGLQTPGEIVDANFGQQPFVFDIEDYMSEWRAKIHSMIARFPIGERLGDWQAVLQNMVSSYLVHHGYCATAMAFARATETMIQEDQTSIKNRQRIQKLVLAGRVGEAIDATQQLYPGLLEHNPNLLFMLKCRQFVEMVNGTDSEVRCFSVRSPKSQDSYPGSPNMSPRHGATNPHLHSTGADSPTCSNGVTPPNKNKSHNKYTGISSASSSPSSSPSSVNYSESNSTDSTKSQPHSATSNQETSDSEMEIEAEHYSNGVTESSTRIMNGTYKHQEILQADDNSVDDTCSSRQLCGGNQAATERMIQFGRELQTLSEQLCRQYGKNATHKKMLQDAFSLLAYSDPWNCPVGQQLDPMQREAICSALNSAILESQNLPKQPPLMLALGQATECVQLMARVRSGSCSFARVDNFLH.

The B30.2/SPRY domain maps to 23–210; it reads LNERLKRLYP…VDANFGQQPF (188 aa). Residues 241 to 273 enclose the LisH domain; it reads WQAVLQNMVSSYLVHHGYCATAMAFARATETMI. The 58-residue stretch at 279–336 folds into the CTLH domain; sequence SIKNRQRIQKLVLAGRVGEAIDATQQLYPGLLEHNPNLLFMLKCRQFVEMVNGTDSEV. The interval 342–454 is disordered; the sequence is RSPKSQDSYP…HYSNGVTESS (113 aa). Composition is skewed to polar residues over residues 343–356 and 371–396; these read SPKSQDSYPGSPNM and GADSPTCSNGVTPPNKNKSHNKYTGI. Over residues 397–420 the composition is skewed to low complexity; the sequence is SSASSSPSSSPSSVNYSESNSTDS. Residues 421–434 show a composition bias toward polar residues; sequence TKSQPHSATSNQET.

This sequence belongs to the RANBP9/10 family.

In terms of biological role, may act as an adapter protein to couple membrane receptors to intracellular signaling pathways. This chain is Ran-binding protein 10 (ranbp10), found in Danio rerio (Zebrafish).